The sequence spans 483 residues: MLRESRMKKGMDPKALKLSSSIEHDKNIFLYDILVDVAHVLTLKKGGYLSEEEAKEIILALKKVKDSGFREDWPYEDVHEAIEAEVTKITPHGAKMHTGRSRNDEVATCLRMFARDHLLNLAEAILNALDVLIKKAEKSHFLMPGFTHLQYAQPTRLSHHLLAYHDMLSRDFERAIEAFRRVNKSPLGSAAFASTGYSLDRVYAARLLGFDGVVEHSEDAVASRDFVIESIFVAAEAMLSISRIAEEIVLFSSEFGFITLPDEFSSTSSIMPQKKNPDIAELLRANAGKIAGNLTSAMMIYKATPFSYNRDFQEMNPLLYESLKRTHLAVEVFASMMGKIKFNPEITERKASKGFATATELADMLVMKYGVPFRMAHRIVGRLAAKELERPTASDVNSAAKELGVEINVRDEDVLEALDVEKVVENRGNLGGTSKAEVERMIKARKSDLKDRKTLLRKLRGEVKMGLKMLYDEAKKLGVDINV.

This sequence belongs to the lyase 1 family. Argininosuccinate lyase subfamily.

Its subcellular location is the cytoplasm. It catalyses the reaction 2-(N(omega)-L-arginino)succinate = fumarate + L-arginine. Its pathway is amino-acid biosynthesis; L-arginine biosynthesis; L-arginine from L-ornithine and carbamoyl phosphate: step 3/3. The chain is Argininosuccinate lyase from Archaeoglobus fulgidus (strain ATCC 49558 / DSM 4304 / JCM 9628 / NBRC 100126 / VC-16).